A 365-amino-acid polypeptide reads, in one-letter code: Chorismate synthase (365 aa).

R46 lines the NADP(+) pocket. FMN contacts are provided by residues 123–125, 241–242, G281, 296–300, and R322; these read RSS, NG, and KPTPS.

This sequence belongs to the chorismate synthase family. In terms of assembly, homotetramer. FMNH2 is required as a cofactor.

It carries out the reaction 5-O-(1-carboxyvinyl)-3-phosphoshikimate = chorismate + phosphate. It functions in the pathway metabolic intermediate biosynthesis; chorismate biosynthesis; chorismate from D-erythrose 4-phosphate and phosphoenolpyruvate: step 7/7. In terms of biological role, catalyzes the anti-1,4-elimination of the C-3 phosphate and the C-6 proR hydrogen from 5-enolpyruvylshikimate-3-phosphate (EPSP) to yield chorismate, which is the branch point compound that serves as the starting substrate for the three terminal pathways of aromatic amino acid biosynthesis. This reaction introduces a second double bond into the aromatic ring system. The polypeptide is Chorismate synthase (Helicobacter pylori (strain J99 / ATCC 700824) (Campylobacter pylori J99)).